The following is a 153-amino-acid chain: Small ribosomal subunit protein uS13 (153 aa).

The protein belongs to the universal ribosomal protein uS13 family. In terms of assembly, part of the 30S ribosomal subunit. Forms a loose heterodimer with protein S19. Forms two bridges to the 50S subunit in the 70S ribosome.

Functionally, located at the top of the head of the 30S subunit, it contacts several helices of the 16S rRNA. In the 70S ribosome it contacts the 23S rRNA (bridge B1a) and protein L5 of the 50S subunit (bridge B1b), connecting the 2 subunits; these bridges are implicated in subunit movement. The chain is Small ribosomal subunit protein uS13 from Pyrobaculum islandicum (strain DSM 4184 / JCM 9189 / GEO3).